Here is an 81-residue protein sequence, read N- to C-terminus: Large ribosomal subunit protein bL27 (81 aa).

Residues 1–22 form a disordered region; the sequence is MAHKKGQGSSRNGRDSNAQRRG.

The protein belongs to the bacterial ribosomal protein bL27 family.

The sequence is that of Large ribosomal subunit protein bL27 from Rhodopirellula baltica (strain DSM 10527 / NCIMB 13988 / SH1).